The sequence spans 498 residues: Glycerol kinase (498 aa).

Threonine 12 is a binding site for ADP. ATP contacts are provided by threonine 12, threonine 13, and serine 14. Threonine 12 is a binding site for sn-glycerol 3-phosphate. Arginine 16 is a binding site for ADP. Arginine 82, glutamate 83, tyrosine 134, and aspartate 243 together coordinate sn-glycerol 3-phosphate. Residues arginine 82, glutamate 83, tyrosine 134, aspartate 243, and glutamine 244 each coordinate glycerol. Residues threonine 265 and glycine 308 each coordinate ADP. Positions 265, 308, 312, and 412 each coordinate ATP. ADP is bound at residue glycine 412.

The protein belongs to the FGGY kinase family.

The catalysed reaction is glycerol + ATP = sn-glycerol 3-phosphate + ADP + H(+). Its pathway is polyol metabolism; glycerol degradation via glycerol kinase pathway; sn-glycerol 3-phosphate from glycerol: step 1/1. With respect to regulation, inhibited by fructose 1,6-bisphosphate (FBP). Functionally, key enzyme in the regulation of glycerol uptake and metabolism. Catalyzes the phosphorylation of glycerol to yield sn-glycerol 3-phosphate. This Rhizobium rhizogenes (strain K84 / ATCC BAA-868) (Agrobacterium radiobacter) protein is Glycerol kinase.